A 718-amino-acid polypeptide reads, in one-letter code: Acetolactate synthase, mitochondrial (718 aa).

Disordered regions lie at residues 1–50 and 72–101; these read MLTR…APVY and RKIQ…APQP. The segment covering 32-45 has biased composition (polar residues); sequence RYSNNIHTSSTQNA. Low complexity predominate over residues 76 to 99; that stretch reads SSASTAAASPAVRPQPAQHFQAAP. Glutamate 173 provides a ligand contact to thiamine diphosphate. Arginine 275 is a binding site for FAD. The disordered stretch occupies residues 296–327; it reads IPAKSAQPGHSPYLPSNPLNPSSQPSDPLPGD. The span at 306–325 shows a compositional bias: low complexity; it reads SPYLPSNPLNPSSQPSDPLP. Residues 397–418 and 449–468 each bind FAD; these read HGSA…LGVR and EIQP…VLGD. Residues 541–621 are thiamine pyrophosphate binding; sequence QHQMWACQYY…VKVLLFNNEF (81 aa). Residues aspartate 592 and asparagine 619 each coordinate Mg(2+).

This sequence belongs to the TPP enzyme family. Mg(2+) is required as a cofactor. The cofactor is thiamine diphosphate.

It is found in the mitochondrion. The enzyme catalyses 2 pyruvate + H(+) = (2S)-2-acetolactate + CO2. Its pathway is amino-acid biosynthesis; L-isoleucine biosynthesis; L-isoleucine from 2-oxobutanoate: step 1/4. The protein operates within amino-acid biosynthesis; L-valine biosynthesis; L-valine from pyruvate: step 1/4. This is Acetolactate synthase, mitochondrial (ILV2) from Cryptococcus neoformans var. neoformans serotype D (strain JEC21 / ATCC MYA-565) (Filobasidiella neoformans).